A 219-amino-acid chain; its full sequence is Arginine transport system permease protein ArtQ (219 aa).

5 consecutive transmembrane segments (helical) span residues leucine 19–valine 39, phenylalanine 51–isoleucine 73, glutamine 88–isoleucine 108, alanine 149–leucine 169, and leucine 187–isoleucine 207. The ABC transmembrane type-1 domain maps to leucine 19–glycine 208.

The protein belongs to the binding-protein-dependent transport system permease family. HisMQ subfamily.

It is found in the cell membrane. Its function is as follows. Part of a binding-protein-dependent transport system for arginine. Probably responsible for the translocation of the substrate across the membrane. In Bacillus subtilis (strain 168), this protein is Arginine transport system permease protein ArtQ (artQ).